The sequence spans 461 residues: Ribosomal protein uS12 methylthiotransferase RimO (461 aa).

An MTTase N-terminal domain is found at 13 to 128 (PKVGFVSLGC…VMQHVHTHLP (116 aa)). [4Fe-4S] cluster-binding residues include Cys22, Cys58, Cys87, Cys159, Cys163, and Cys166. Positions 145 to 390 (LTPRHYAYLK…MEVAEEVSAK (246 aa)) constitute a Radical SAM core domain. The 69-residue stretch at 393 to 461 (AKKVGKTLKV…ADGHDLWGEV (69 aa)) folds into the TRAM domain.

The protein belongs to the methylthiotransferase family. RimO subfamily. It depends on [4Fe-4S] cluster as a cofactor.

The protein localises to the cytoplasm. It carries out the reaction L-aspartate(89)-[ribosomal protein uS12]-hydrogen + (sulfur carrier)-SH + AH2 + 2 S-adenosyl-L-methionine = 3-methylsulfanyl-L-aspartate(89)-[ribosomal protein uS12]-hydrogen + (sulfur carrier)-H + 5'-deoxyadenosine + L-methionine + A + S-adenosyl-L-homocysteine + 2 H(+). Catalyzes the methylthiolation of an aspartic acid residue of ribosomal protein uS12. The protein is Ribosomal protein uS12 methylthiotransferase RimO of Paraburkholderia phytofirmans (strain DSM 17436 / LMG 22146 / PsJN) (Burkholderia phytofirmans).